Consider the following 285-residue polypeptide: Urease accessory protein UreD (285 aa).

The protein belongs to the UreD family. As to quaternary structure, ureD, UreF and UreG form a complex that acts as a GTP-hydrolysis-dependent molecular chaperone, activating the urease apoprotein by helping to assemble the nickel containing metallocenter of UreC. The UreE protein probably delivers the nickel.

Its subcellular location is the cytoplasm. In terms of biological role, required for maturation of urease via the functional incorporation of the urease nickel metallocenter. The sequence is that of Urease accessory protein UreD from Methylobacillus flagellatus (strain ATCC 51484 / DSM 6875 / VKM B-1610 / KT).